Here is a 144-residue protein sequence, read N- to C-terminus: Putative sugar phosphate isomerase RBE_0278 (144 aa).

Residue histidine 12 coordinates substrate. Residue histidine 101 is the Proton donor of the active site. Substrate is bound at residue arginine 135.

This sequence belongs to the LacAB/RpiB family.

The sequence is that of Putative sugar phosphate isomerase RBE_0278 from Rickettsia bellii (strain RML369-C).